The chain runs to 64 residues: Prokaryotic ubiquitin-like protein Pup (64 aa).

Positions 1-37 (MAQEQTKRGGGGGEDDDLTGSTAAGQERREKLTDETD) are disordered. The segment at 21–58 (STAAGQERREKLTDETDDLLDEIDDVLEENAEDFVRAY) is ARC ATPase binding. The stretch at 23–52 (AAGQERREKLTDETDDLLDEIDDVLEENAE) forms a coiled coil. Gln-64 bears the Deamidated glutamine mark. Gln-64 participates in a covalent cross-link: Isoglutamyl lysine isopeptide (Gln-Lys) (interchain with K-? in acceptor proteins).

It belongs to the prokaryotic ubiquitin-like protein family. Strongly interacts with the proteasome-associated ATPase ARC through a hydrophobic interface; the interacting region of Pup lies in its C-terminal half. There is one Pup binding site per ARC hexamer ring. Is modified by deamidation of its C-terminal glutamine to glutamate by the deamidase Dop, a prerequisite to the subsequent pupylation process.

Its pathway is protein degradation; proteasomal Pup-dependent pathway. Functionally, protein modifier that is covalently attached to lysine residues of substrate proteins, thereby targeting them for proteasomal degradation. The tagging system is termed pupylation. This chain is Prokaryotic ubiquitin-like protein Pup, found in Mycolicibacterium vanbaalenii (strain DSM 7251 / JCM 13017 / BCRC 16820 / KCTC 9966 / NRRL B-24157 / PYR-1) (Mycobacterium vanbaalenii).